The sequence spans 46 residues: Osteocalcin 2 (46 aa).

In terms of domain architecture, Gla spans 1-43 (AVPAGTLSPLQMESLREVCEVNVACDEMADTAGIVAAYTXFYG). At threonine 6 the chain carries Phosphothreonine. Ca(2+) is bound by residues glutamate 13, glutamate 17, glutamate 20, and aspartate 26. 4-carboxyglutamate occurs at positions 13, 17, and 20. A disulfide bridge connects residues cysteine 19 and cysteine 25. Residue glutamate 27 is modified to 4-carboxyglutamate.

It belongs to the osteocalcin/matrix Gla protein family. Post-translationally, gamma-carboxyglutamate residues are formed by vitamin K dependent carboxylation by GGCX. These residues are essential for the binding of calcium.

It is found in the secreted. The carboxylated form is one of the main organic components of the bone matrix, which constitutes 1-2% of the total bone protein. The carboxylated form binds strongly to apatite and calcium. The polypeptide is Osteocalcin 2 (Solea senegalensis (Senegalese sole)).